The sequence spans 450 residues: MSMEFDAVIIGGGVSGCATFYTLSEYSSLKRVAIVEKCSKLAQISSSAKANSQTIHDGSIETNYTPEKAKKVRLSAYKTRQYALNKGLQNKAIFETQKMAIGVGDEECEFMKKRYESFKEIFVGLEEFDKQTIKELEPNVILGASGIDRHESIIGHGFRKDWSTMNYAKLSENFVEEALKLKPNNQVFLNFKVKKIEKRNDTYALISEDAEEVYAKFVLVNAGSYALPLAQSMGYGLDLGCLPVAGSFYFVPDLLKGKVYTVQNPKLPFAAVHGDPDAIIKGKTRIGPTALAMPKLERNKCWLKGISLELLKMDLNKDVFKIAFDLMSDKEIRNYVLKNMVFELPVIGKREFLKDAQKIIPSLSLEDLEYAHGFGEVRPQVLDKTKRKLELGEKKICTHKGITFNMTPSPGATSCLQNALVDSQEIVAYLGESFELERFYKDLSPEELES.

The protein belongs to the MQO family. Requires FAD as cofactor.

It carries out the reaction (S)-malate + a quinone = a quinol + oxaloacetate. It participates in carbohydrate metabolism; tricarboxylic acid cycle; oxaloacetate from (S)-malate (quinone route): step 1/1. The sequence is that of Probable malate:quinone oxidoreductase from Helicobacter acinonychis (strain Sheeba).